The primary structure comprises 402 residues: Protein PMR5 (402 aa).

The chain crosses the membrane as a helical; Signal-anchor for type II membrane protein span at residues 7–23 (LLGISVVSAIFFLVLQQ). Residues 40 to 60 (GSSSGSSGNQYSSSRPSAGFQ) are disordered. Low complexity predominate over residues 41 to 56 (SSSGSSGNQYSSSRPS). Positions 140–142 (GDS) match the GDS motif motif. A DCXHWCLPGXXDXWN motif motif is present at residues 379-393 (DCSHWCLPGLPDTWN).

It belongs to the PC-esterase family. TBL subfamily. In terms of tissue distribution, expressed in flowers, siliques, stems and leaves.

The protein localises to the membrane. Required for nonhost resistance (NHR) during plant-microbe interactions. Plants mutated in PMR5 are resistant to powdery mildew species. May act as a bridging protein that binds pectin and other cell wall polysaccharides. Probably involved in maintaining esterification of pectins. May be involved in the specific O-acetylation of cell wall polymers. This Arabidopsis thaliana (Mouse-ear cress) protein is Protein PMR5 (PMR5).